Here is a 178-residue protein sequence, read N- to C-terminus: Oligoribonuclease (178 aa).

The region spanning 7–168 (LIWIDLEMTG…DDIRESIAEL (162 aa)) is the Exonuclease domain. Residue Tyr128 is part of the active site.

The protein belongs to the oligoribonuclease family.

The protein localises to the cytoplasm. Functionally, 3'-to-5' exoribonuclease specific for small oligoribonucleotides. This chain is Oligoribonuclease, found in Pseudomonas syringae pv. tomato (strain ATCC BAA-871 / DC3000).